Here is a 106-residue protein sequence, read N- to C-terminus: UPF0145 protein VC_A0951 (106 aa).

Belongs to the UPF0145 family.

This Vibrio cholerae serotype O1 (strain ATCC 39315 / El Tor Inaba N16961) protein is UPF0145 protein VC_A0951.